The following is a 638-amino-acid chain: Phosphomethylpyrimidine synthase (638 aa).

Residues asparagine 243, methionine 272, tyrosine 301, histidine 337, 357–359 (SRG), 398–401 (DGLR), and glutamate 437 each bind substrate. Histidine 441 serves as a coordination point for Zn(2+). Tyrosine 464 is a substrate binding site. Zn(2+) is bound at residue histidine 505. Residues cysteine 585, cysteine 588, and cysteine 593 each coordinate [4Fe-4S] cluster.

Belongs to the ThiC family. In terms of assembly, homodimer. [4Fe-4S] cluster serves as cofactor.

The enzyme catalyses 5-amino-1-(5-phospho-beta-D-ribosyl)imidazole + S-adenosyl-L-methionine = 4-amino-2-methyl-5-(phosphooxymethyl)pyrimidine + CO + 5'-deoxyadenosine + formate + L-methionine + 3 H(+). Its pathway is cofactor biosynthesis; thiamine diphosphate biosynthesis. Functionally, catalyzes the synthesis of the hydroxymethylpyrimidine phosphate (HMP-P) moiety of thiamine from aminoimidazole ribotide (AIR) in a radical S-adenosyl-L-methionine (SAM)-dependent reaction. The protein is Phosphomethylpyrimidine synthase of Azoarcus sp. (strain BH72).